Consider the following 567-residue polypeptide: MRQSQSFIPTLREVPADAEVKSHQLLLRAGFIRQSASGVYTFLPLGQRVLQKVEAIIREEMNRAGAIELLMPALQPAELWQQSGRWYSYGPELMRLKDRHERDFALGPTHEEIITALVRDEVKTYKRLPLTLYQIQVKFRDEKRPRFGLLRGREFIMKDAYSFHTSQESLDETYNKMYEAYSNIFRRCGLNFRAVIADSGAIGGKDTHEFMVLSEIGEDTIAYSDASDYAANIEMAPVITTYEKSDEPLRKLEKVHTPGQKTIEEVASYLQVTPEKCIKSLLFKVDDRYVLVLVRGDHEANDVKVKNLFDASVVELATPEETKQAMNCEVGSLGPIGVSESVTIVADHAVKAIVNGVCGANEEGYHYIGVNPERDFTISEYADLRFIQEGDPSPDGKGTIRFARGIEVGHVFKLGTRYSKAMNATYLDENGRSQTMIMGCYGIGVSRLVAAIAEQFADENGLVWPASVAPFHVHLISVNAKNEEQRQLADEWYEKLGQAGFEVLYDDRPERAGVKFADSDLIGIPIRVTVGKRANEGIVEIKVRQTGESMEVSVDELIDTIRRLLQQ.

This sequence belongs to the class-II aminoacyl-tRNA synthetase family. ProS type 1 subfamily. As to quaternary structure, homodimer.

It is found in the cytoplasm. It catalyses the reaction tRNA(Pro) + L-proline + ATP = L-prolyl-tRNA(Pro) + AMP + diphosphate. Functionally, catalyzes the attachment of proline to tRNA(Pro) in a two-step reaction: proline is first activated by ATP to form Pro-AMP and then transferred to the acceptor end of tRNA(Pro). As ProRS can inadvertently accommodate and process non-cognate amino acids such as alanine and cysteine, to avoid such errors it has two additional distinct editing activities against alanine. One activity is designated as 'pretransfer' editing and involves the tRNA(Pro)-independent hydrolysis of activated Ala-AMP. The other activity is designated 'posttransfer' editing and involves deacylation of mischarged Ala-tRNA(Pro). The misacylated Cys-tRNA(Pro) is not edited by ProRS. This Geobacillus sp. (strain WCH70) protein is Proline--tRNA ligase.